Here is a 393-residue protein sequence, read N- to C-terminus: Glutamyl-tRNA reductase (393 aa).

Residues 47–50 (TCGR), serine 98, 103–105 (ETD), and glutamine 109 each bind substrate. The Nucleophile role is filled by cysteine 48. Position 177-182 (177-182 (GAGAVG)) interacts with NADP(+).

The protein belongs to the glutamyl-tRNA reductase family. In terms of assembly, homodimer.

It carries out the reaction (S)-4-amino-5-oxopentanoate + tRNA(Glu) + NADP(+) = L-glutamyl-tRNA(Glu) + NADPH + H(+). The protein operates within porphyrin-containing compound metabolism; protoporphyrin-IX biosynthesis; 5-aminolevulinate from L-glutamyl-tRNA(Glu): step 1/2. Catalyzes the NADPH-dependent reduction of glutamyl-tRNA(Glu) to glutamate 1-semialdehyde (GSA). The protein is Glutamyl-tRNA reductase of Pyrobaculum islandicum (strain DSM 4184 / JCM 9189 / GEO3).